The chain runs to 195 residues: Protein GrpE (195 aa).

Residues Met-1–Gln-24 are compositionally biased toward polar residues. Positions Met-1–Glu-40 are disordered.

It belongs to the GrpE family. In terms of assembly, homodimer.

The protein resides in the cytoplasm. Participates actively in the response to hyperosmotic and heat shock by preventing the aggregation of stress-denatured proteins, in association with DnaK and GrpE. It is the nucleotide exchange factor for DnaK and may function as a thermosensor. Unfolded proteins bind initially to DnaJ; upon interaction with the DnaJ-bound protein, DnaK hydrolyzes its bound ATP, resulting in the formation of a stable complex. GrpE releases ADP from DnaK; ATP binding to DnaK triggers the release of the substrate protein, thus completing the reaction cycle. Several rounds of ATP-dependent interactions between DnaJ, DnaK and GrpE are required for fully efficient folding. The chain is Protein GrpE from Sodalis glossinidius (strain morsitans).